The sequence spans 364 residues: Phosphoserine aminotransferase (364 aa).

R42 provides a ligand contact to L-glutamate. Pyridoxal 5'-phosphate contacts are provided by residues 76 to 77 (GR), W102, T156, D175, and Q198. K199 carries the N6-(pyridoxal phosphate)lysine modification. Residue 240–241 (NT) participates in pyridoxal 5'-phosphate binding.

It belongs to the class-V pyridoxal-phosphate-dependent aminotransferase family. SerC subfamily. Homodimer. Requires pyridoxal 5'-phosphate as cofactor.

The protein resides in the cytoplasm. It carries out the reaction O-phospho-L-serine + 2-oxoglutarate = 3-phosphooxypyruvate + L-glutamate. It catalyses the reaction 4-(phosphooxy)-L-threonine + 2-oxoglutarate = (R)-3-hydroxy-2-oxo-4-phosphooxybutanoate + L-glutamate. It functions in the pathway amino-acid biosynthesis; L-serine biosynthesis; L-serine from 3-phospho-D-glycerate: step 2/3. It participates in cofactor biosynthesis; pyridoxine 5'-phosphate biosynthesis; pyridoxine 5'-phosphate from D-erythrose 4-phosphate: step 3/5. Functionally, catalyzes the reversible conversion of 3-phosphohydroxypyruvate to phosphoserine and of 3-hydroxy-2-oxo-4-phosphonooxybutanoate to phosphohydroxythreonine. This is Phosphoserine aminotransferase from Shewanella sediminis (strain HAW-EB3).